The sequence spans 180 residues: Putative adenylate kinase (180 aa).

ATP is bound by residues Gly-10, Gly-12, Lys-13, Thr-14, and Thr-15. Residues 30–50 (NLRDFALEKGIGEVKGDELEV) are NMP. An LID region spans residues 99–109 (ERGYSKDKIGE). ATP-binding residues include Arg-100 and Lys-138.

The protein belongs to the adenylate kinase family. AK6 subfamily. In terms of assembly, interacts with uS11. Not a structural component of 40S pre-ribosomes, but transiently interacts with them by binding to uS11.

It carries out the reaction AMP + ATP = 2 ADP. The catalysed reaction is ATP + H2O = ADP + phosphate + H(+). Its function is as follows. Broad-specificity nucleoside monophosphate (NMP) kinase that catalyzes the reversible transfer of the terminal phosphate group between nucleoside triphosphates and monophosphates. Also has ATPase activity. Involved in the late maturation steps of the 30S ribosomal particles, specifically 16S rRNA maturation. While NMP activity is not required for ribosome maturation, ATPase activity is. Associates transiently with small ribosomal subunit protein uS11. ATP hydrolysis breaks the interaction with uS11. May temporarily remove uS11 from the ribosome to enable a conformational change of the ribosomal RNA that is needed for the final maturation step of the small ribosomal subunit. This is Putative adenylate kinase from Pyrococcus furiosus (strain ATCC 43587 / DSM 3638 / JCM 8422 / Vc1).